The chain runs to 485 residues: Warthog protein 1 (485 aa).

The signal sequence occupies residues 1 to 21 (MMVMNPLTATFLAALIGTAAS). The disordered stretch occupies residues 236–258 (DQRLSPSTDVQSDSYVSPTEADP). The segment covering 239 to 252 (LSPSTDVQSDSYVS) has biased composition (polar residues).

This sequence belongs to the hedgehog family. Post-translationally, the C-terminal domain displays an autoproteolysis activity.

The protein localises to the secreted. The protein resides in the cell surface. It is found in the cell membrane. It localises to the extracellular space. Functionally, intercellular signal essential for a variety of patterning events during development. The protein is Warthog protein 1 (wrt-1) of Caenorhabditis elegans.